A 141-amino-acid chain; its full sequence is Large ribosomal subunit protein uL22 (141 aa).

It belongs to the universal ribosomal protein uL22 family. In terms of assembly, part of the 50S ribosomal subunit.

This protein binds specifically to 23S rRNA; its binding is stimulated by other ribosomal proteins, e.g. L4, L17, and L20. It is important during the early stages of 50S assembly. It makes multiple contacts with different domains of the 23S rRNA in the assembled 50S subunit and ribosome. Its function is as follows. The globular domain of the protein is located near the polypeptide exit tunnel on the outside of the subunit, while an extended beta-hairpin is found that lines the wall of the exit tunnel in the center of the 70S ribosome. This chain is Large ribosomal subunit protein uL22, found in Frankia alni (strain DSM 45986 / CECT 9034 / ACN14a).